We begin with the raw amino-acid sequence, 302 residues long: UPF0761 membrane protein Tola_0461 (302 aa).

The next 6 membrane-spanning stretches (helical) occupy residues 51 to 71, 111 to 131, 150 to 170, 188 to 208, 222 to 242, and 256 to 276; these read YVSL…LSWL, TTSI…AAID, ITMY…SLLL, LGGG…ILLL, ALLG…GFGY, and ALAG…VVLL.

It belongs to the UPF0761 family.

The protein localises to the cell inner membrane. The protein is UPF0761 membrane protein Tola_0461 of Tolumonas auensis (strain DSM 9187 / NBRC 110442 / TA 4).